Reading from the N-terminus, the 171-residue chain is Tubulin polymerization-promoting protein family member 2 (171 aa).

Residues 120-171 (LTDTSKYTGTHKERFDESGKGKGIAGREDVTDNSGYVSGYKGAGTYDKKGSN) form a disordered region. Over residues 129-149 (THKERFDESGKGKGIAGREDV) the composition is skewed to basic and acidic residues.

The protein belongs to the TPPP family.

The protein localises to the cytoplasm. The protein resides in the cytosol. It is found in the cell projection. Its subcellular location is the cilium. It localises to the flagellum. Its function is as follows. Probable regulator of microtubule dynamics required for sperm motility. In contrast to other members of the family, has no microtubule bundling activity. This is Tubulin polymerization-promoting protein family member 2 from Bos taurus (Bovine).